The following is a 590-amino-acid chain: Multidrug resistance ABC transporter ATP-binding and permease protein (590 aa).

6 consecutive transmembrane segments (helical) span residues 35–55, 79–99, 150–170, 176–196, 261–281, and 292–312; these read YLFF…QLQV, IALY…LGIF, IPQA…MLQM, LAMI…MTFG, VMML…IYLI, and LGMM…ATFF. Residues 38–317 enclose the ABC transmembrane type-1 domain; the sequence is FIIGILAGIV…VATFFTELAK (280 aa). The region spanning 349–584 is the ABC transporter domain; the sequence is LSARHVDFAY…HPLYAKYVSE (236 aa). ATP is bound at residue 382-389; sequence GPSGGGKS.

It belongs to the ABC transporter superfamily. Multidrug exporter LmrA (TC 3.A.1.117.1) family. As to quaternary structure, homodimer.

The protein localises to the cell membrane. The enzyme catalyses ATP + H2O + xenobioticSide 1 = ADP + phosphate + xenobioticSide 2.. Functionally, efflux transporter for a variety of amphiphilic cationic compounds, including antibiotics. This chain is Multidrug resistance ABC transporter ATP-binding and permease protein (lmrA), found in Lactococcus lactis subsp. lactis (strain IL1403) (Streptococcus lactis).